The primary structure comprises 305 residues: NK1 transcription factor-related protein 2 (305 aa).

Disordered stretches follow at residues 51–158 (EEVE…KPRR) and 210–257 (KWKK…PGAL). A compositionally biased stretch (acidic residues) spans 87–96 (SEAEEEEEAE). Over residues 97 to 115 (DAGRAHQPERWQGVHEGSP) the composition is skewed to basic and acidic residues. Over residues 129-140 (AEGLPASPGSPG) the composition is skewed to low complexity. The homeobox DNA-binding region spans 156–215 (PRRARTAFTYEQLVALENKFRATRYLSVCERLNLALSLSLTETQVKIWFQNRRTKWKKQN).

Belongs to the NK-1 homeobox family. Interacts (via the homeodomain) with HIPK1, HIPK2, and HIPK3. Post-translationally, phosphorylated by HIPK2 in vitro. Expression detected in the brain, testis and spleen. In the testis, expressed in the germ cells of the seminiferous epithelium, predominantly in elongating spermatids and spermatozoa. Expressed throughout the brain with highest levels in regions of the cerebral cortex, hippocampus, diencephalon, pons, medulla and cerebellum.

It is found in the nucleus. It localises to the nucleolus. In terms of biological role, transcriptional repressor. May play a role in early development as a Wnt/beta-catenin effector, hence controlling pluripotency and preimplantation development of embryonic stem cells. May promote adipogenesis in mesenchymal stem cells, possibly by inhibiting the expression of the antiadipogenic factor NR2F2. May inhibit osteoblastogenic differentiation. This chain is NK1 transcription factor-related protein 2 (Nkx1-2), found in Mus musculus (Mouse).